Reading from the N-terminus, the 329-residue chain is Ubiquinol oxidase 1c, mitochondrial (329 aa).

A mitochondrion-targeting transit peptide spans 1–45; it reads MITTLLRRSLLDASKQATSINGILFHQLAPAKYFRVPAVGGLRDF. Residues 154 to 174 traverse the membrane as a helical segment; it reads AIMLETVAAVPGMVGGMLMHF. Residues glutamate 158, glutamate 197, and histidine 200 each coordinate Fe cation. A helical transmembrane segment spans residues 216 to 236; that stretch reads ALVISVQGVFFNAYLIGYIIS. Residues glutamate 248, glutamate 299, and histidine 302 each coordinate Fe cation.

Belongs to the alternative oxidase family. As to quaternary structure, homodimer; disulfide-linked. It depends on Fe cation as a cofactor. Expressed in roots, stems, leaves, cotyledons and flowers. High expression in stamens.

The protein resides in the mitochondrion inner membrane. The enzyme catalyses 2 a ubiquinol + O2 = 2 a ubiquinone + 2 H2O. Catalyzes the cyanide-resistant oxidation of ubiquinol and the reduction of molecular oxygen to water, but does not translocate protons and consequently is not linked to oxidative phosphorylation. May increase respiration when the cytochrome respiratory pathway is restricted, or in response to low temperatures. The sequence is that of Ubiquinol oxidase 1c, mitochondrial (AOX1C) from Arabidopsis thaliana (Mouse-ear cress).